Here is a 150-residue protein sequence, read N- to C-terminus: Large ribosomal subunit protein uL16 (150 aa).

This sequence belongs to the universal ribosomal protein uL16 family. In terms of assembly, component of the small ribosomal subunit. Mature ribosomes consist of a small (40S) and a large (60S) subunit. The 40S subunit contains about 33 different proteins and 1 molecule of RNA (18S). The 60S subunit contains about 49 different proteins and 3 molecules of RNA (25S, 5.8S and 5S).

This chain is Large ribosomal subunit protein uL16 (RPL10), found in Nicotiana tabacum (Common tobacco).